Reading from the N-terminus, the 646-residue chain is Lipoteichoic acid synthase (646 aa).

The Cytoplasmic segment spans residues 1–7 (MKLHKKK). The helical transmembrane segment at 8–28 (LTLFAFFILTVLTVTLKTYFS) threads the bilayer. Residues 29–43 (YYVDFSLGVKGLVQN) lie on the Extracellular side of the membrane. Residues 44-64 (LILLMNPYSLIALVLSIFLFF) form a helical membrane-spanning segment. Residues 65-68 (KGKK) are Cytoplasmic-facing. Residues 69 to 89 (AFWFIFIGGFILTFLLYANVV) form a helical membrane-spanning segment. Residues 90 to 119 (YFRFFSDFLTFSTLNQAGNVESMGGAVTAS) are Extracellular-facing. Residues 120-140 (FKWYDFVYFIDTIIYLFVLIF) form a helical membrane-spanning segment. Topologically, residues 141–153 (KQKWLDKRVFSKK) are cytoplasmic. The chain crosses the membrane as a helical span at residues 154–174 (FVPVVMAASIALFFLNLAFAE). The Extracellular portion of the chain corresponds to 175-646 (SDRPELLTRT…KTGPKGQERK (472 aa)). Residues Glu-255 and Thr-300 each contribute to the Mn(2+) site. Thr-300 is an active-site residue. His-416 is a binding site for substrate. 2 residues coordinate Mn(2+): Asp-475 and His-476. The segment at 579-646 (IYDNKNNEPM…KTGPKGQERK (68 aa)) is disordered. Basic and acidic residues-rich tracts occupy residues 580-607 (YDNKNNEPMTEKPKDFEKRKQQSEKDLQ) and 625-646 (DFDKIKPSEYEYKTGPKGQERK).

The protein belongs to the LTA synthase family. Post-translationally, proteolytically cleaved.

It localises to the cell membrane. The protein localises to the secreted. It participates in cell wall biogenesis; lipoteichoic acid biosynthesis. Catalyzes the polymerization of lipoteichoic acid (LTA) polyglycerol phosphate, a reaction that presumably uses phosphatidylglycerol (PG) as substrate. Is required for staphylococcal growth and cell division process. The chain is Lipoteichoic acid synthase (ltaS) from Staphylococcus saprophyticus subsp. saprophyticus (strain ATCC 15305 / DSM 20229 / NCIMB 8711 / NCTC 7292 / S-41).